Here is a 262-residue protein sequence, read N- to C-terminus: Nurim (262 aa).

At 1 to 4 (MAPA) the chain is on the nuclear side. A helical membrane pass occupies residues 5–28 (LLLIPAALASFILAFGTGVEFVRF). At 29-58 (TSLRPLLGGIPESGGPDARQGWLAALQDRS) the chain is on the perinuclear space side. A helical membrane pass occupies residues 59-80 (ILAPLAWDLGLLLLFVGQHSLM). Over 81–97 (AAERVKAWTSRYFGVLQ) the chain is Nuclear. The helical transmembrane segment at 98–114 (RSLYVACTALALQLVMR) threads the bilayer. The Perinuclear space segment spans residues 115–133 (YWEPIPKGPVLWEARAEPW). Residues 134–164 (ATWVPLLCFVLHVISWLLIFSILLVFDYAEL) traverse the membrane as a helical segment. The Nuclear segment spans residues 165 to 191 (MGLKQVYYHVLGLGEPLALKSPRALRL). Residues 192 to 210 (FSHLRHPVCVELLTVLWVV) traverse the membrane as a helical segment. Over 211 to 216 (PTLGTD) the chain is Perinuclear space. The chain crosses the membrane as a helical span at residues 217–234 (RLLLAFLLTLYLGLAHGL). Residues 235 to 262 (DQQDLRYLRAQLQRKLHLLSRPQDGEAE) are Nuclear-facing.

Belongs to the nurim family.

The protein resides in the nucleus inner membrane. The sequence is that of Nurim (NRM) from Homo sapiens (Human).